The following is an 84-amino-acid chain: Cell division topological specificity factor (84 aa).

The protein belongs to the MinE family.

Its function is as follows. Prevents the cell division inhibition by proteins MinC and MinD at internal division sites while permitting inhibition at polar sites. This ensures cell division at the proper site by restricting the formation of a division septum at the midpoint of the long axis of the cell. The chain is Cell division topological specificity factor from Paraburkholderia xenovorans (strain LB400).